A 267-amino-acid polypeptide reads, in one-letter code: MAAGEPGDLGVYSFRFLPQKTFQSLSTPQTTSRLRQWSMLGRIEAQAFGFDQTFQAYRKDDFVTAFFKDPNVIPNLKLLSESSGEWLTLGTEVKKIEAINVPCTQLSMSFFNRLYDEAIVRDNGYIVKCLDSFCDPFLISDELRKVLLVEDSEKYEVFSQPEREEFLFCLFKHLCLGGALCQYEDVINPYLETTKLIYKDLVSVRKNPQTKKIQITSSIFKVTAYDSVGVCYPSTKSHEQTFSYFIVDPIKRHVHVLYHCYGMGEVS.

It belongs to the CFAP300 family. Interacts with DNAAF2.

Its subcellular location is the cytoplasm. The protein resides in the cytoskeleton. It is found in the cilium axoneme. Its function is as follows. Cilium- and flagellum-specific protein that plays a role in axonemal structure organization and motility. May play a role in outer and inner dynein arm assembly. The sequence is that of Cilia- and flagella-associated protein 300 from Bos taurus (Bovine).